A 71-amino-acid chain; its full sequence is DNA-directed RNA polymerase subunit epsilon (71 aa).

The protein belongs to the RNA polymerase subunit epsilon family. RNAP is composed of a core of 2 alpha, a beta and a beta' subunit. The core is associated with a delta subunit, and at least one of epsilon or omega. When a sigma factor is associated with the core the holoenzyme is formed, which can initiate transcription.

It catalyses the reaction RNA(n) + a ribonucleoside 5'-triphosphate = RNA(n+1) + diphosphate. Its function is as follows. A non-essential component of RNA polymerase (RNAP). The polypeptide is DNA-directed RNA polymerase subunit epsilon (Staphylococcus saprophyticus subsp. saprophyticus (strain ATCC 15305 / DSM 20229 / NCIMB 8711 / NCTC 7292 / S-41)).